The primary structure comprises 178 residues: Meiotically up-regulated gene 95 protein (178 aa).

At methionine 1–threonine 12 the chain is on the cytoplasmic side. A helical; Signal-anchor for type II membrane protein transmembrane segment spans residues leucine 13–phenylalanine 30. Over lysine 31–asparagine 178 the chain is Lumenal.

Its subcellular location is the endoplasmic reticulum membrane. Its function is as follows. Has a role in meiosis. The protein is Meiotically up-regulated gene 95 protein (mug95) of Schizosaccharomyces pombe (strain 972 / ATCC 24843) (Fission yeast).